A 39-amino-acid chain; its full sequence is Contryphan-Cal1 (39 aa).

Residues 1-20 (MTRTAVLLLTLLFLVAMAAS) form the signal peptide. Residues Cys29 and Cys35 are joined by a disulfide bond.

In terms of tissue distribution, expressed by the venom duct.

It localises to the secreted. Its function is as follows. Probable neurotoxin. The chain is Contryphan-Cal1 from Californiconus californicus (California cone).